We begin with the raw amino-acid sequence, 338 residues long: Ketol-acid reductoisomerase (NADP(+)) (338 aa).

The KARI N-terminal Rossmann domain occupies 1 to 181 (MKVFYDKDCD…GGGRTGIIET (181 aa)). NADP(+) is bound by residues 24-27 (YGSQ), Arg47, Ser50, Thr52, and 82-85 (DEFQ). His107 is a catalytic residue. Gly133 serves as a coordination point for NADP(+). Residues 182–327 (TFKDETETDL…EQLRSMMPWI (146 aa)) form the KARI C-terminal knotted domain. Positions 190, 194, 226, and 230 each coordinate Mg(2+). Position 251 (Ser251) interacts with substrate.

The protein belongs to the ketol-acid reductoisomerase family. Requires Mg(2+) as cofactor.

The enzyme catalyses (2R)-2,3-dihydroxy-3-methylbutanoate + NADP(+) = (2S)-2-acetolactate + NADPH + H(+). It carries out the reaction (2R,3R)-2,3-dihydroxy-3-methylpentanoate + NADP(+) = (S)-2-ethyl-2-hydroxy-3-oxobutanoate + NADPH + H(+). The protein operates within amino-acid biosynthesis; L-isoleucine biosynthesis; L-isoleucine from 2-oxobutanoate: step 2/4. It functions in the pathway amino-acid biosynthesis; L-valine biosynthesis; L-valine from pyruvate: step 2/4. Involved in the biosynthesis of branched-chain amino acids (BCAA). Catalyzes an alkyl-migration followed by a ketol-acid reduction of (S)-2-acetolactate (S2AL) to yield (R)-2,3-dihydroxy-isovalerate. In the isomerase reaction, S2AL is rearranged via a Mg-dependent methyl migration to produce 3-hydroxy-3-methyl-2-ketobutyrate (HMKB). In the reductase reaction, this 2-ketoacid undergoes a metal-dependent reduction by NADPH to yield (R)-2,3-dihydroxy-isovalerate. The protein is Ketol-acid reductoisomerase (NADP(+)) of Pseudomonas fluorescens (strain ATCC BAA-477 / NRRL B-23932 / Pf-5).